A 404-amino-acid polypeptide reads, in one-letter code: Tryptophan synthase beta chain (404 aa).

Lys94 carries the N6-(pyridoxal phosphate)lysine modification.

It belongs to the TrpB family. As to quaternary structure, tetramer of two alpha and two beta chains. Requires pyridoxal 5'-phosphate as cofactor.

The catalysed reaction is (1S,2R)-1-C-(indol-3-yl)glycerol 3-phosphate + L-serine = D-glyceraldehyde 3-phosphate + L-tryptophan + H2O. The protein operates within amino-acid biosynthesis; L-tryptophan biosynthesis; L-tryptophan from chorismate: step 5/5. Functionally, the beta subunit is responsible for the synthesis of L-tryptophan from indole and L-serine. This is Tryptophan synthase beta chain from Staphylococcus saprophyticus subsp. saprophyticus (strain ATCC 15305 / DSM 20229 / NCIMB 8711 / NCTC 7292 / S-41).